The chain runs to 390 residues: 3-ketoacyl-CoA thiolase (390 aa).

The active-site Acyl-thioester intermediate is cysteine 95. Active-site proton acceptor residues include histidine 346 and cysteine 376.

The protein belongs to the thiolase-like superfamily. Thiolase family. Heterotetramer of two alpha chains (FadB) and two beta chains (FadA).

It localises to the cytoplasm. The enzyme catalyses an acyl-CoA + acetyl-CoA = a 3-oxoacyl-CoA + CoA. It functions in the pathway lipid metabolism; fatty acid beta-oxidation. Catalyzes the final step of fatty acid oxidation in which acetyl-CoA is released and the CoA ester of a fatty acid two carbons shorter is formed. The sequence is that of 3-ketoacyl-CoA thiolase from Acinetobacter baumannii (strain ATCC 17978 / DSM 105126 / CIP 53.77 / LMG 1025 / NCDC KC755 / 5377).